Reading from the N-terminus, the 208-residue chain is MKLVQVQHPLVKHKLGLMRSAEINTKKFRELATEVGSLLTYEATADLETEKVIIDGWCGPVEIDQIKGKKVTVVPILRAGLGMMDGVLEHVPSARISVVGMYRDEETLEPVPYFQKLASDLEERLAIVVDPMLATGGSMIATIDLLKAKGCKHIKVLVLVAAPEGIKALEAAHPDIELYTASVDSHLNEQGYIIPGLGDAGDKIFGTK.

Residues arginine 78, arginine 103, and 130–138 each bind 5-phospho-alpha-D-ribose 1-diphosphate; that span reads DPMLATGGS. Residues isoleucine 193 and 198–200 contribute to the uracil site; that span reads GDA. A 5-phospho-alpha-D-ribose 1-diphosphate-binding site is contributed by aspartate 199.

The protein belongs to the UPRTase family. It depends on Mg(2+) as a cofactor.

The enzyme catalyses UMP + diphosphate = 5-phospho-alpha-D-ribose 1-diphosphate + uracil. It functions in the pathway pyrimidine metabolism; UMP biosynthesis via salvage pathway; UMP from uracil: step 1/1. With respect to regulation, allosterically activated by GTP. Functionally, catalyzes the conversion of uracil and 5-phospho-alpha-D-ribose 1-diphosphate (PRPP) to UMP and diphosphate. This chain is Uracil phosphoribosyltransferase, found in Pasteurella multocida (strain Pm70).